A 779-amino-acid polypeptide reads, in one-letter code: Translation initiation factor IF-2 (779 aa).

A disordered region spans residues 44–193 (RQLDNAVDGT…TPPKPKELPE (150 aa)). The span at 53 to 65 (TNKKAEAPKKETT) shows a compositional bias: basic and acidic residues. Positions 66-81 (SNENGNSKGPNKPNMT) are enriched in polar residues. 2 stretches are compositionally biased toward low complexity: residues 82–93 (NSNEKSNKPNKP) and 117–167 (ANTS…NNKG). The tr-type G domain occupies 280 to 449 (ERPPVVTIMG…LLVSEVEELK (170 aa)). Positions 289-296 (GHVDHGKT) are G1. 289–296 (GHVDHGKT) is a binding site for GTP. Residues 314–318 (GITQH) are G2. The segment at 335 to 338 (DTPG) is G3. GTP is bound by residues 335 to 339 (DTPGH) and 389 to 392 (NKID). Residues 389-392 (NKID) form a G4 region. Residues 425-427 (SAK) form a G5 region.

This sequence belongs to the TRAFAC class translation factor GTPase superfamily. Classic translation factor GTPase family. IF-2 subfamily.

The protein localises to the cytoplasm. One of the essential components for the initiation of protein synthesis. Protects formylmethionyl-tRNA from spontaneous hydrolysis and promotes its binding to the 30S ribosomal subunits. Also involved in the hydrolysis of GTP during the formation of the 70S ribosomal complex. This Listeria monocytogenes serovar 1/2a (strain ATCC BAA-679 / EGD-e) protein is Translation initiation factor IF-2.